Reading from the N-terminus, the 182-residue chain is UPF0301 protein MCA0413 1 (182 aa).

The protein belongs to the UPF0301 (AlgH) family.

The sequence is that of UPF0301 protein MCA0413 1 from Methylococcus capsulatus (strain ATCC 33009 / NCIMB 11132 / Bath).